A 245-amino-acid polypeptide reads, in one-letter code: Cytochrome P450 CYP82H23 (245 aa).

This sequence belongs to the cytochrome P450 family. The cofactor is heme.

Functionally, probable heme-thiolate monooxygenase. The polypeptide is Cytochrome P450 CYP82H23 (Panax ginseng (Korean ginseng)).